Reading from the N-terminus, the 247-residue chain is Large ribosomal subunit protein uL24m (247 aa).

A KOW domain is found at 84–117; the sequence is FFRGDRIEVLVGKDKGKQGIVTQVIPERNWVIVE.

This sequence belongs to the universal ribosomal protein uL24 family. Component of the mitochondrial ribosome large subunit (39S) which comprises a 16S rRNA and about 50 distinct proteins.

The protein resides in the mitochondrion. The polypeptide is Large ribosomal subunit protein uL24m (mRpL24) (Drosophila melanogaster (Fruit fly)).